A 182-amino-acid polypeptide reads, in one-letter code: MSNSDLEANMRKSVEATQRNFNTIRTGRANPSLLDRINVEYYGADTPLKSLASLSTPDSQTIAVQPFDMGSLALIEKAIATSDLGFTPNNDGKIIRINVPPLTEERRKEFCKLAAKYSEEGKVALRSVRRDAIDKIKKQEKEGDLSEDQSRDEQDQVQKTTDRFIAELEKHLADKEVEILKV.

Residues 136–158 (IKKQEKEGDLSEDQSRDEQDQVQ) are disordered.

Belongs to the RRF family.

It localises to the cytoplasm. Responsible for the release of ribosomes from messenger RNA at the termination of protein biosynthesis. May increase the efficiency of translation by recycling ribosomes from one round of translation to another. This Synechococcus sp. (strain CC9311) protein is Ribosome-recycling factor.